The primary structure comprises 263 residues: Hydroxyethylthiazole kinase (263 aa).

Met-41 serves as a coordination point for substrate. ATP is bound by residues Lys-117 and Ser-163. Position 190 (Gly-190) interacts with substrate.

Belongs to the Thz kinase family. Mg(2+) is required as a cofactor.

It carries out the reaction 5-(2-hydroxyethyl)-4-methylthiazole + ATP = 4-methyl-5-(2-phosphooxyethyl)-thiazole + ADP + H(+). Its pathway is cofactor biosynthesis; thiamine diphosphate biosynthesis; 4-methyl-5-(2-phosphoethyl)-thiazole from 5-(2-hydroxyethyl)-4-methylthiazole: step 1/1. In terms of biological role, catalyzes the phosphorylation of the hydroxyl group of 4-methyl-5-beta-hydroxyethylthiazole (THZ). This is Hydroxyethylthiazole kinase from Thermoanaerobacter sp. (strain X514).